The following is a 584-amino-acid chain: Probable lysosomal cobalamin transporter (584 aa).

Helical transmembrane passes span 8–28, 46–66, 93–113, 144–164, 189–209, 313–333, 350–370, 376–396, 421–441, and 509–529; these read LIWI…STFV, IFTL…VALV, TVVY…IVPF, TLVF…VPVA, ALTF…VIYS, LLGG…MLLT, ILGK…AASV, VIFI…IATI, ATVM…MIVV, and GIVD…VLLI.

Belongs to the LIMR family. LMBRD1 subfamily.

The protein localises to the lysosome membrane. Probable lysosomal cobalamin transporter. Required to export cobalamin from lysosomes allowing its conversion to cofactors. The sequence is that of Probable lysosomal cobalamin transporter from Coccidioides immitis (strain RS) (Valley fever fungus).